The chain runs to 86 residues: Small ribosomal subunit protein bS20 (86 aa).

Positions 1–25 (MANIKSQMKRIRTNEAARKRNQSVK) are disordered.

It belongs to the bacterial ribosomal protein bS20 family.

Binds directly to 16S ribosomal RNA. The chain is Small ribosomal subunit protein bS20 from Nocardia farcinica (strain IFM 10152).